The following is a 99-amino-acid chain: Large ribosomal subunit protein bL27 (99 aa).

The disordered stretch occupies residues Met-1–Leu-21.

The protein belongs to the bacterial ribosomal protein bL27 family.

The polypeptide is Large ribosomal subunit protein bL27 (Thermomicrobium roseum (strain ATCC 27502 / DSM 5159 / P-2)).